The primary structure comprises 559 residues: Urocanate hydratase (559 aa).

NAD(+) is bound by residues 53–54 (GG), glutamine 131, 177–179 (GMG), glutamate 197, arginine 202, 243–244 (NA), 264–268 (QTSAH), 274–275 (YL), and tyrosine 323. The active site involves cysteine 411. Position 493 (glycine 493) interacts with NAD(+).

This sequence belongs to the urocanase family. The cofactor is NAD(+).

The protein resides in the cytoplasm. It carries out the reaction 4-imidazolone-5-propanoate = trans-urocanate + H2O. The protein operates within amino-acid degradation; L-histidine degradation into L-glutamate; N-formimidoyl-L-glutamate from L-histidine: step 2/3. In terms of biological role, catalyzes the conversion of urocanate to 4-imidazolone-5-propionate. The protein is Urocanate hydratase of Pseudomonas paraeruginosa (strain DSM 24068 / PA7) (Pseudomonas aeruginosa (strain PA7)).